We begin with the raw amino-acid sequence, 754 residues long: Bifunctional sesterterpene synthase astC (754 aa).

Positions 1-24 (MASLEVFVLYLRIFFISFMSRARS) are cleaved as a signal peptide. The tract at residues 58–388 (IQYRHSKLVD…RYHFHKPEHW (331 aa)) is sesterterpene synthase. The Mg(2+) site is built by Asp-149 and Asp-153. Positions 389–753 (RQVENVDDDG…LRLLLKRLHV (365 aa)) are geranylfarnesyl diphosphate synthase. A compositionally biased stretch (basic and acidic residues) spans 392–403 (ENVDDDGNKSDD). A disordered region spans residues 392-414 (ENVDDDGNKSDDSGIAMKDSPES). Positions 512 and 516 each coordinate Mg(2+).

It in the N-terminal section; belongs to the terpene synthase family. This sequence in the C-terminal section; belongs to the FPP/GGPP synthase family. Mg(2+) is required as a cofactor.

It catalyses the reaction (2E,6E,10E,14E)-geranylfarnesyl diphosphate = preasperterpenoid A + diphosphate. Its pathway is secondary metabolite biosynthesis; terpenoid biosynthesis. Its function is as follows. Bifunctional sesterterpene synthase; part of the gene cluster that mediates the biosynthesis of the asperterpenoids, sesterterpenes that exhibit anti-tuberculosis activity. The first step of the pathway is performed by the sesterterpene synthase astC that possesses both prenyl transferase and terpene cyclase activity, converting isopentenyl diphosphate and dimethylallyl diphosphate into geranylfarnesyl diphosphate (GFPP) and further converting GFPP into preasperterpenoid A, respectively. The cytochrome P450 monooxygenase astB then dually oxidizes preasperterpenoid A to produce asperterpenoid A along with a minor product, asperterpenoid B. Finally, the cytochrome P450 monooxygenase astA converts asperterpenoid A into asperterpenoid C. This chain is Bifunctional sesterterpene synthase astC, found in Talaromyces wortmannii (Penicillium wortmannii).